The primary structure comprises 434 residues: 4-hydroxyphenylpyruvate dioxygenase (434 aa).

The tract at residues 1-21 (MPPTPTTPAATGAAAAVTPEH) is disordered. Residues 7 to 19 (TPAATGAAAAVTP) show a composition bias toward low complexity. 2 consecutive VOC domains span residues 41-192 (SFHH…FLPG) and 208-368 (RFDH…IFTK). The Fe cation site is built by His211, His293, and Glu379.

This sequence belongs to the 4HPPD family. The cofactor is Fe cation.

It is found in the cytoplasm. It catalyses the reaction 3-(4-hydroxyphenyl)pyruvate + O2 = homogentisate + CO2. The protein operates within amino-acid degradation; L-phenylalanine degradation; acetoacetate and fumarate from L-phenylalanine: step 3/6. It functions in the pathway cofactor biosynthesis; prenylquinone biosynthesis. This Hordeum vulgare (Barley) protein is 4-hydroxyphenylpyruvate dioxygenase.